The sequence spans 515 residues: Ribose import ATP-binding protein RbsA 1 (515 aa).

ABC transporter domains lie at 8-244 and 256-503; these read FQME…IGRE and VPAT…LNIH. Residue 40 to 47 coordinates ATP; that stretch reads GENGAGKS.

The protein belongs to the ABC transporter superfamily. Ribose importer (TC 3.A.1.2.1) family. The complex is composed of an ATP-binding protein (RbsA), two transmembrane proteins (RbsC) and a solute-binding protein (RbsB).

It is found in the cell inner membrane. The enzyme catalyses D-ribose(out) + ATP + H2O = D-ribose(in) + ADP + phosphate + H(+). Functionally, part of the ABC transporter complex RbsABC involved in ribose import. Responsible for energy coupling to the transport system. In Mesorhizobium japonicum (strain LMG 29417 / CECT 9101 / MAFF 303099) (Mesorhizobium loti (strain MAFF 303099)), this protein is Ribose import ATP-binding protein RbsA 1.